The chain runs to 234 residues: 7-cyano-7-deazaguanine synthase (234 aa).

An ATP-binding site is contributed by 7 to 17 (LSGGLDSAVCM). Residues C197, C208, C211, and C214 each contribute to the Zn(2+) site.

It belongs to the QueC family. It depends on Zn(2+) as a cofactor.

It carries out the reaction 7-carboxy-7-deazaguanine + NH4(+) + ATP = 7-cyano-7-deazaguanine + ADP + phosphate + H2O + H(+). It participates in purine metabolism; 7-cyano-7-deazaguanine biosynthesis. Functionally, catalyzes the ATP-dependent conversion of 7-carboxy-7-deazaguanine (CDG) to 7-cyano-7-deazaguanine (preQ(0)). The sequence is that of 7-cyano-7-deazaguanine synthase from Methanococcus aeolicus (strain ATCC BAA-1280 / DSM 17508 / OCM 812 / Nankai-3).